The primary structure comprises 722 residues: D-galactosyl-beta-1-&gt;4-L-rhamnose phosphorylase (722 aa).

D319 acts as the Proton donor in catalysis.

It belongs to the glycoside hydrolase 112 family.

The enzyme catalyses beta-D-galactosyl-(1-&gt;4)-L-rhamnose + phosphate = alpha-D-galactose 1-phosphate + L-rhamnopyranose. Its function is as follows. Reversibly phosphorolyzes beta-D-galactosyl-(1-&gt;4)-L-rhamnose to form alpha-D-galactose 1-phosphate and L-rhamnose. Does not phosphorolyze galacto-N-biose or lacto-N-biose. In the reverse reaction, has the highest activity toward L-rhamnose, also has activity toward L-mannose, and low activity toward L-lyxose, D-glucose, 2-deoxy-D-glucose and D-galactose. This Lachnoclostridium phytofermentans (strain ATCC 700394 / DSM 18823 / ISDg) (Clostridium phytofermentans) protein is D-galactosyl-beta-1-&gt;4-L-rhamnose phosphorylase.